The following is a 372-amino-acid chain: Chorismate synthase (372 aa).

Position 48 (R48) interacts with NADP(+). FMN is bound by residues 125-127 (RSS), G285, 300-304 (KPTPS), and R327.

The protein belongs to the chorismate synthase family. FMNH2 is required as a cofactor.

The enzyme catalyses 5-O-(1-carboxyvinyl)-3-phosphoshikimate = chorismate + phosphate. Its pathway is metabolic intermediate biosynthesis; chorismate biosynthesis; chorismate from D-erythrose 4-phosphate and phosphoenolpyruvate: step 7/7. Catalyzes the anti-1,4-elimination of the C-3 phosphate and the C-6 proR hydrogen from 5-enolpyruvylshikimate-3-phosphate (EPSP) to yield chorismate, which is the branch point compound that serves as the starting substrate for the three terminal pathways of aromatic amino acid biosynthesis. This reaction introduces a second double bond into the aromatic ring system. The protein is Chorismate synthase of Methanocella arvoryzae (strain DSM 22066 / NBRC 105507 / MRE50).